Reading from the N-terminus, the 187-residue chain is Small ribosomal subunit protein uS10m (187 aa).

This sequence belongs to the universal ribosomal protein uS10 family. As to quaternary structure, component of the mitochondrial ribosome small subunit (28S) which comprises a 12S rRNA and about 30 distinct proteins.

The protein localises to the mitochondrion. This chain is Small ribosomal subunit protein uS10m (mrps10), found in Danio rerio (Zebrafish).